Here is a 102-residue protein sequence, read N- to C-terminus: NADH-quinone oxidoreductase subunit K (102 aa).

Helical transmembrane passes span 5 to 25, 31 to 51, and 66 to 86; these read ITHY…GIFL, IIIL…FVAF, and FVLT…VVFF.

Belongs to the complex I subunit 4L family. As to quaternary structure, NDH-1 is composed of 14 different subunits. Subunits NuoA, H, J, K, L, M, N constitute the membrane sector of the complex.

The protein resides in the cell inner membrane. It carries out the reaction a quinone + NADH + 5 H(+)(in) = a quinol + NAD(+) + 4 H(+)(out). NDH-1 shuttles electrons from NADH, via FMN and iron-sulfur (Fe-S) centers, to quinones in the respiratory chain. The immediate electron acceptor for the enzyme in this species is believed to be ubiquinone. Couples the redox reaction to proton translocation (for every two electrons transferred, four hydrogen ions are translocated across the cytoplasmic membrane), and thus conserves the redox energy in a proton gradient. In Bartonella grahamii (strain as4aup), this protein is NADH-quinone oxidoreductase subunit K.